The following is a 251-amino-acid chain: Phosphate import ATP-binding protein PstB (251 aa).

An ABC transporter domain is found at 5–246; sequence MNSKDVNFWY…PENKKTEDYI (242 aa). 37–44 contributes to the ATP binding site; sequence GPSGCGKS.

The protein belongs to the ABC transporter superfamily. Phosphate importer (TC 3.A.1.7) family. As to quaternary structure, the complex is composed of two ATP-binding proteins (PstB), two transmembrane proteins (PstC and PstA) and a solute-binding protein (PstS).

It is found in the cell membrane. The catalysed reaction is phosphate(out) + ATP + H2O = ADP + 2 phosphate(in) + H(+). Functionally, part of the ABC transporter complex PstSACB involved in phosphate import. Responsible for energy coupling to the transport system. The sequence is that of Phosphate import ATP-binding protein PstB from Methanococcus maripaludis (strain DSM 14266 / JCM 13030 / NBRC 101832 / S2 / LL).